Reading from the N-terminus, the 414-residue chain is Gamma-glutamyl phosphate reductase (414 aa).

The protein belongs to the gamma-glutamyl phosphate reductase family.

The protein localises to the cytoplasm. The catalysed reaction is L-glutamate 5-semialdehyde + phosphate + NADP(+) = L-glutamyl 5-phosphate + NADPH + H(+). It participates in amino-acid biosynthesis; L-proline biosynthesis; L-glutamate 5-semialdehyde from L-glutamate: step 2/2. Catalyzes the NADPH-dependent reduction of L-glutamate 5-phosphate into L-glutamate 5-semialdehyde and phosphate. The product spontaneously undergoes cyclization to form 1-pyrroline-5-carboxylate. This is Gamma-glutamyl phosphate reductase from Xanthomonas campestris pv. campestris (strain ATCC 33913 / DSM 3586 / NCPPB 528 / LMG 568 / P 25).